A 3108-amino-acid polypeptide reads, in one-letter code: Probable polyketide synthase 39 (3108 aa).

One can recognise a Ketosynthase family 3 (KS3) domain in the interval 9–440 (DDDVAVIGIG…GSNVCLILSE (432 aa)). Active-site for beta-ketoacyl synthase activity residues include Cys-181, His-320, and His-363. The segment at 643 to 676 (GVSADIIIGHSLGEISSAYCSGMIDFQTLCYLTY) is acyl/malonyl transferase. Residue Ser-653 is the For acyl/malonyl transferase activity of the active site. Residues 939–1068 (HEKIKSEGPS…GNFSLFKHNI (130 aa)) form an N-terminal hotdog fold region. The PKS/mFAS DH domain maps to 939-1265 (HEKIKSEGPS…CTIAASNPDS (327 aa)). His-980 (proton acceptor; for dehydratase activity) is an active-site residue. The C-terminal hotdog fold stretch occupies residues 1085-1265 (NFTSISKQDL…CTIAASNPDS (181 aa)). Catalysis depends on Asp-1157, which acts as the Proton donor; for dehydratase activity. The segment at 1375–1435 (NNNNNNNNNN…NNNNNNNNNN (61 aa)) is disordered. The region spanning 2566-2643 (GNNEIIHSTI…QSIEIIKSAL (78 aa)) is the Carrier domain. An O-(pantetheine 4'-phosphoryl)serine modification is found at Ser-2603. A helical transmembrane segment spans residues 2702-2722 (IFLTGSTGFLGAYLLMELIKM).

The cofactor is pantetheine 4'-phosphate.

It localises to the membrane. Probable polyketide synthase. This chain is Probable polyketide synthase 39 (pks39), found in Dictyostelium discoideum (Social amoeba).